Here is a 353-residue protein sequence, read N- to C-terminus: Photosystem II D2 protein (353 aa).

Thr2 carries the N-acetylthreonine modification. Thr2 bears the Phosphothreonine mark. A helical membrane pass occupies residues 41–61; that stretch reads CAYFALGGWFTGTTFVTSWYT. His118 is a binding site for chlorophyll a. A helical membrane pass occupies residues 125-141; the sequence is GFMLRQFELARSVQLRP. 2 residues coordinate pheophytin a: Gln130 and Asn143. Residues 153 to 166 traverse the membrane as a helical segment; sequence VFVSVFLIYPLGQS. A chlorophyll a-binding site is contributed by His198. The helical transmembrane segment at 208–228 threads the bilayer; it reads AALLCAIHGATVENTLFEDGD. Residues His215 and Phe262 each contribute to the a plastoquinone site. Fe cation is bound at residue His215. His269 is a Fe cation binding site. Residues 279-295 traverse the membrane as a helical segment; that stretch reads GLWMSAIGVVGLALNLR.

The protein belongs to the reaction center PufL/M/PsbA/D family. In terms of assembly, PSII is composed of 1 copy each of membrane proteins PsbA, PsbB, PsbC, PsbD, PsbE, PsbF, PsbH, PsbI, PsbJ, PsbK, PsbL, PsbM, PsbT, PsbX, PsbY, PsbZ, Psb30/Ycf12, at least 3 peripheral proteins of the oxygen-evolving complex and a large number of cofactors. It forms dimeric complexes. The cofactor is The D1/D2 heterodimer binds P680, chlorophylls that are the primary electron donor of PSII, and subsequent electron acceptors. It shares a non-heme iron and each subunit binds pheophytin, quinone, additional chlorophylls, carotenoids and lipids. There is also a Cl(-1) ion associated with D1 and D2, which is required for oxygen evolution. The PSII complex binds additional chlorophylls, carotenoids and specific lipids..

The protein localises to the plastid. It localises to the chloroplast thylakoid membrane. It catalyses the reaction 2 a plastoquinone + 4 hnu + 2 H2O = 2 a plastoquinol + O2. Its function is as follows. Photosystem II (PSII) is a light-driven water:plastoquinone oxidoreductase that uses light energy to abstract electrons from H(2)O, generating O(2) and a proton gradient subsequently used for ATP formation. It consists of a core antenna complex that captures photons, and an electron transfer chain that converts photonic excitation into a charge separation. The D1/D2 (PsbA/PsbD) reaction center heterodimer binds P680, the primary electron donor of PSII as well as several subsequent electron acceptors. D2 is needed for assembly of a stable PSII complex. The sequence is that of Photosystem II D2 protein from Pinus thunbergii (Japanese black pine).